The chain runs to 473 residues: Glucose facilitated diffusion protein (473 aa).

Residues 1 to 13 (MSSESSQGLVTRL) are Cytoplasmic-facing. The chain crosses the membrane as a helical span at residues 14–34 (ALIAAIGGLLFGYDSAVIAAI). Residues 35-59 (GTPVDIHFIAPRHLSATAAASLSGM) lie on the Periplasmic side of the membrane. The helical transmembrane segment at 60–80 (VVVAVLVGCVTGSLLSGWIGI) threads the bilayer. Over 81-85 (RFGRR) the chain is Cytoplasmic. The helical transmembrane segment at 86–106 (GGLLMSSICFVAAGFGAALTE) threads the bilayer. Residues 107–112 (KLFGTG) are Periplasmic-facing. Residues 113 to 133 (GSALQIFCFFRFLAGLGIGVV) form a helical membrane-spanning segment. Residues 134–158 (STLTPTYIAEIAPPDKRGQMVSGQQ) lie on the Cytoplasmic side of the membrane. The chain crosses the membrane as a helical span at residues 159–179 (MAIVTGALTGYIFTWLLAHFG). Over 180–187 (SIDWVNAS) the chain is Periplasmic. A helical membrane pass occupies residues 188 to 208 (GWCWSPASEGLIGIAFLLLLL). The Cytoplasmic portion of the chain corresponds to 209-257 (TAPDTPHWLVMKGRHSEASKILARLEPQADPNLTIQKIKAGFDKAMDKS). A helical transmembrane segment spans residues 258–278 (SAGLFAFGITVVFAGVSVAAF). Residues 279–303 (QQLVGINAVLYYAPQMFQNLGFGAD) lie on the Periplasmic side of the membrane. The chain crosses the membrane as a helical span at residues 304-324 (TALLQTISIGVVNFIFTMIAS). At 325–335 (RVVDRFGRKPL) the chain is on the cytoplasmic side. The chain crosses the membrane as a helical span at residues 336–356 (LIWGALGMAAMMAVLGCCFWF). Residues 357-366 (KVGGVLPLAS) are Periplasmic-facing. Residues 367-387 (VLLYIAVFGMSWGPVCWVVLS) form a helical membrane-spanning segment. Residues 388–396 (EMFPSSIKG) are Cytoplasmic-facing. Residues 397-417 (AAMPIAVTGQWLANILVNFLF) traverse the membrane as a helical segment. The Periplasmic portion of the chain corresponds to 418–429 (KVADGSPALNQT). A helical transmembrane segment spans residues 430 to 450 (FNHGFSYLVFAALSILGGLIV). The Cytoplasmic portion of the chain corresponds to 451–473 (ARFVPETKGRSLDEIEEMWRSQK).

It belongs to the major facilitator superfamily. Sugar transporter (TC 2.A.1.1) family.

It localises to the cell inner membrane. Its function is as follows. Allows uptake of glucose by the cell; allows growth on glucose minimal medium by E.coli cells impaired in glucose transport. Also transports fructose, but has a strong preference for glucose. The polypeptide is Glucose facilitated diffusion protein (Zymomonas mobilis subsp. mobilis (strain ATCC 31821 / ZM4 / CP4)).